Here is a 408-residue protein sequence, read N- to C-terminus: Argininosuccinate synthase (408 aa).

ATP is bound by residues 8–16 (AYSGGLDTT) and Ala35. Residues Tyr86 and Ser91 each contribute to the L-citrulline site. An ATP-binding site is contributed by Gly116. L-aspartate-binding residues include Thr118, Asn122, and Asp123. Position 122 (Asn122) interacts with L-citrulline. Residues Arg126, Ser177, Ser186, Glu263, and Tyr275 each coordinate L-citrulline.

It belongs to the argininosuccinate synthase family. Type 1 subfamily. As to quaternary structure, homotetramer.

The protein localises to the cytoplasm. The enzyme catalyses L-citrulline + L-aspartate + ATP = 2-(N(omega)-L-arginino)succinate + AMP + diphosphate + H(+). Its pathway is amino-acid biosynthesis; L-arginine biosynthesis; L-arginine from L-ornithine and carbamoyl phosphate: step 2/3. This chain is Argininosuccinate synthase, found in Lachnospira eligens (strain ATCC 27750 / DSM 3376 / VPI C15-48 / C15-B4) (Eubacterium eligens).